We begin with the raw amino-acid sequence, 623 residues long: Xaa-Pro aminopeptidase 1 (623 aa).

Arg77 provides a ligand contact to a peptide. N6-acetyllysine is present on Lys304. His395 provides a ligand contact to a peptide. Mn(2+)-binding residues include Asp415, Asp426, and His489. A peptide is bound by residues His489, His498, and Glu523. Residues Glu523 and Glu537 each coordinate Mn(2+).

Belongs to the peptidase M24B family. As to quaternary structure, homodimer. The cofactor is Mn(2+).

It is found in the cytoplasm. The protein resides in the cytosol. It carries out the reaction Release of any N-terminal amino acid, including proline, that is linked to proline, even from a dipeptide or tripeptide.. In terms of biological role, metalloaminopeptidase that catalyzes the removal of a penultimate prolyl residue from the N-termini of peptides, such as Arg-Pro-Pro. Contributes to the degradation of bradykinin. The chain is Xaa-Pro aminopeptidase 1 (XPNPEP1) from Bos taurus (Bovine).